The following is a 187-amino-acid chain: MMSTSDAPLDPVEFIHSRIRTVPDWPQPGVMFRDITPLLQSAKALRVLVDLFVERYVDANLDYIAGLDARGFIIAPIVAYELSVGFVPIRKVGKLPYATQRESYALEYGTATVEIHEDACKPGDRVVIVDDLIATGGTMMAGKNLLERLGAVVVEGAAIVDLPDLGGSALLREAGLPLYTVTEFPGH.

The protein belongs to the purine/pyrimidine phosphoribosyltransferase family. In terms of assembly, homodimer.

The protein localises to the cytoplasm. It carries out the reaction AMP + diphosphate = 5-phospho-alpha-D-ribose 1-diphosphate + adenine. It functions in the pathway purine metabolism; AMP biosynthesis via salvage pathway; AMP from adenine: step 1/1. Catalyzes a salvage reaction resulting in the formation of AMP, that is energically less costly than de novo synthesis. The protein is Adenine phosphoribosyltransferase of Burkholderia pseudomallei (strain 668).